Reading from the N-terminus, the 350-residue chain is Anthranilate phosphoribosyltransferase (350 aa).

Residues Gly94, 97 to 98 (GD), Thr102, 104 to 107 (NIST), 122 to 130 (KHGNRAVSS), and Ser134 contribute to the 5-phospho-alpha-D-ribose 1-diphosphate site. An anthranilate-binding site is contributed by Gly94. Ser106 is a Mg(2+) binding site. Residue Asn125 coordinates anthranilate. Arg180 is an anthranilate binding site. Mg(2+) is bound by residues Asp239 and Glu240.

This sequence belongs to the anthranilate phosphoribosyltransferase family. Homodimer. It depends on Mg(2+) as a cofactor.

The enzyme catalyses N-(5-phospho-beta-D-ribosyl)anthranilate + diphosphate = 5-phospho-alpha-D-ribose 1-diphosphate + anthranilate. Its pathway is amino-acid biosynthesis; L-tryptophan biosynthesis; L-tryptophan from chorismate: step 2/5. Its function is as follows. Catalyzes the transfer of the phosphoribosyl group of 5-phosphorylribose-1-pyrophosphate (PRPP) to anthranilate to yield N-(5'-phosphoribosyl)-anthranilate (PRA). The polypeptide is Anthranilate phosphoribosyltransferase (Geobacter sulfurreducens (strain ATCC 51573 / DSM 12127 / PCA)).